Reading from the N-terminus, the 375-residue chain is 2-methylcitrate synthase (375 aa).

2 residues coordinate substrate: K72 and H187. H222 is a catalytic residue. Residue 255–259 (KIMGF) participates in CoA binding. H261 is a catalytic residue. R270 is a substrate binding site. D312 is an active-site residue. 2 residues coordinate substrate: R337 and R356.

This sequence belongs to the citrate synthase family. As to quaternary structure, homodimer.

The enzyme catalyses propanoyl-CoA + oxaloacetate + H2O = (2S,3S)-2-methylcitrate + CoA + H(+). The catalysed reaction is oxaloacetate + acetyl-CoA + H2O = citrate + CoA + H(+). It functions in the pathway organic acid metabolism; propanoate degradation. The protein operates within carbohydrate metabolism; tricarboxylic acid cycle; isocitrate from oxaloacetate: step 1/2. Functionally, involved in the catabolism of short chain fatty acids (SCFA) via the tricarboxylic acid (TCA)(acetyl degradation route) and via the 2-methylcitrate cycle II (propionate degradation route). Catalyzes the Claisen condensation of propionyl-CoA and oxaloacetate (OAA) to yield 2-methylcitrate (2-MC) and CoA. Catalyzes the condensation of oxaloacetate with acetyl-CoA. This is 2-methylcitrate synthase (prpC) from Shewanella oneidensis (strain ATCC 700550 / JCM 31522 / CIP 106686 / LMG 19005 / NCIMB 14063 / MR-1).